We begin with the raw amino-acid sequence, 446 residues long: Trigger factor (446 aa).

In terms of domain architecture, PPIase FKBP-type spans 161-246 (GDRLTIDFKG…VSKVERSELP (86 aa)). The disordered stretch occupies residues 422 to 446 (VSYEDAVKPRTAPAEQAEDGEQSAE). Positions 437–446 (QAEDGEQSAE) are enriched in acidic residues.

It belongs to the FKBP-type PPIase family. Tig subfamily.

The protein resides in the cytoplasm. It carries out the reaction [protein]-peptidylproline (omega=180) = [protein]-peptidylproline (omega=0). Involved in protein export. Acts as a chaperone by maintaining the newly synthesized protein in an open conformation. Functions as a peptidyl-prolyl cis-trans isomerase. The polypeptide is Trigger factor (Hahella chejuensis (strain KCTC 2396)).